The sequence spans 1447 residues: Calcium-dependent secretion activator (1447 aa).

Residues 1–15 (MIDPSSSEEEGEDDA) show a composition bias toward acidic residues. 2 disordered regions span residues 1–35 (MIDP…TSAV) and 101–163 (DTGN…EEEE). Composition is skewed to polar residues over residues 18–32 (NVSS…TKGT) and 111–126 (GIPS…QSVG). Over residues 127–144 (SSRANSLPRPLSPSPSLT) the composition is skewed to low complexity. The segment covering 145-163 (SEKHETAEPHGKHEREEEE) has biased composition (basic and acidic residues). The 131-residue stretch at 417-547 (SKYGLQKLKR…PLSSKSPEWH (131 aa)) folds into the C2 domain. Residues 573–683 (NMKHCGYLYA…WVMAMYRATG (111 aa)) enclose the PH domain. Residues 970–1157 (VDMDRVLSEQ…DMIEQCIQRT (188 aa)) form the MHD1 domain. The segment covering 1386 to 1395 (REGEEEDNGD) has biased composition (acidic residues). The segment at 1386 to 1406 (REGEEEDNGDESTSNIPRGLP) is disordered.

In terms of tissue distribution, restricted to the nervous system at all stages of development and highly localized at synapses (at protein level).

The protein resides in the cytoplasmic vesicle membrane. It is found in the synapse. In terms of biological role, calcium-binding protein involved in exocytosis of vesicles filled with neurotransmitters and neuropeptides. May specifically mediate the Ca(2+)-dependent exocytosis of large dense-core vesicles (DCVs) and other dense-core vesicles. However, it probably also participates in small clear synaptic vesicles (SVs) exocytosis and it is unclear whether its function is related to Ca(2+) triggering. The polypeptide is Calcium-dependent secretion activator (Drosophila melanogaster (Fruit fly)).